Consider the following 216-residue polypeptide: Ribonuclease HII (216 aa).

Positions 28–216 (DIVCGVDEAG…PVRAALDLIR (189 aa)) constitute an RNase H type-2 domain. Positions 34, 35, and 126 each coordinate a divalent metal cation.

This sequence belongs to the RNase HII family. Mn(2+) is required as a cofactor. It depends on Mg(2+) as a cofactor.

Its subcellular location is the cytoplasm. It catalyses the reaction Endonucleolytic cleavage to 5'-phosphomonoester.. Functionally, endonuclease that specifically degrades the RNA of RNA-DNA hybrids. The chain is Ribonuclease HII from Burkholderia vietnamiensis (strain G4 / LMG 22486) (Burkholderia cepacia (strain R1808)).